Here is a 344-residue protein sequence, read N- to C-terminus: MTETLTIRRPDDWHLHFRDGAMMRGVVPYTARQFARAIVMPNLTPPVTTTALGAAYRERILAAVPEGVDFRPLMTAYLTDETDADDLIDGYTHGVFTAAKLYPANATTNSASGVTDVEALYPVFERMAAAGMVLCIHGEVTDADVDVFDREKEFIERTMAPLHAAIPALKIAFEHITTSDAVDFVVGANDNIGATITPQHLHINRNAMLVGGIQPHNYCLPVAKRETHRLALRQAATSGPPKFFLGTDSAPHEKHTKESACGCAGIFGAPYALESYLAVFEEEDALDKFEAFASLNGPAFYGLPVNDETITLERVPHNVPDSLETEGGKVVPFHAGQELNWRLK.

Zn(2+)-binding residues include His14 and His16. Residues 16 to 18 (HFR) and Asn42 contribute to the substrate site. Residues Lys100, His137, and His175 each coordinate Zn(2+). The residue at position 100 (Lys100) is an N6-carboxylysine. His137 provides a ligand contact to substrate. Substrate is bound at residue Leu220. Asp248 serves as a coordination point for Zn(2+). Asp248 is an active-site residue. Positions 252 and 264 each coordinate substrate.

Belongs to the metallo-dependent hydrolases superfamily. DHOase family. Class II DHOase subfamily. As to quaternary structure, homodimer. It depends on Zn(2+) as a cofactor.

It carries out the reaction (S)-dihydroorotate + H2O = N-carbamoyl-L-aspartate + H(+). It participates in pyrimidine metabolism; UMP biosynthesis via de novo pathway; (S)-dihydroorotate from bicarbonate: step 3/3. Functionally, catalyzes the reversible cyclization of carbamoyl aspartate to dihydroorotate. In Erythrobacter litoralis (strain HTCC2594), this protein is Dihydroorotase.